The primary structure comprises 768 residues: DNA ligase (768 aa).

Residues 30–34 (DAEYD), 79–80 (SL), and glutamate 190 each bind NAD(+). Lysine 192 functions as the N6-AMP-lysine intermediate in the catalytic mechanism. The NAD(+) site is built by arginine 213, glutamate 250, lysine 367, and lysine 391. Zn(2+)-binding residues include cysteine 485, cysteine 488, cysteine 503, and cysteine 509. The BRCT domain maps to 678–767 (AAEQPLSGLS…IPPEIQARMQ (90 aa)).

It belongs to the NAD-dependent DNA ligase family. LigA subfamily. Requires Mg(2+) as cofactor. The cofactor is Mn(2+).

It carries out the reaction NAD(+) + (deoxyribonucleotide)n-3'-hydroxyl + 5'-phospho-(deoxyribonucleotide)m = (deoxyribonucleotide)n+m + AMP + beta-nicotinamide D-nucleotide.. In terms of biological role, DNA ligase that catalyzes the formation of phosphodiester linkages between 5'-phosphoryl and 3'-hydroxyl groups in double-stranded DNA using NAD as a coenzyme and as the energy source for the reaction. It is essential for DNA replication and repair of damaged DNA. This Magnetococcus marinus (strain ATCC BAA-1437 / JCM 17883 / MC-1) protein is DNA ligase.